We begin with the raw amino-acid sequence, 487 residues long: Putative KilA-N domain-containing protein L37 (487 aa).

Positions 1–12 (MKVQKSSKKPLK) are enriched in basic residues. A disordered region spans residues 1–137 (MKVQKSSKKP…DINSDDDNNL (137 aa)). Positions 22–34 (KSGSKSMKSSKSS) are enriched in low complexity. Acidic residues-rich tracts occupy residues 47-77 (DSEI…ESSD) and 111-136 (VLDD…DDNN). Residues 175-284 (EISKGIYGTF…HKVSKIVNDY (110 aa)) form the KilA-N domain. A coiled-coil region spans residues 290 to 338 (FDKHEQLIKGKDDKIAELTRKIDKQTSLMKDQKSTIKEQDKKINELLSK).

The polypeptide is Putative KilA-N domain-containing protein L37 (Acanthamoeba polyphaga mimivirus (APMV)).